Consider the following 471-residue polypeptide: Argininosuccinate lyase (471 aa).

The protein belongs to the lyase 1 family. Argininosuccinate lyase subfamily.

The protein localises to the cytoplasm. It catalyses the reaction 2-(N(omega)-L-arginino)succinate = fumarate + L-arginine. The protein operates within amino-acid biosynthesis; L-arginine biosynthesis; L-arginine from L-ornithine and carbamoyl phosphate: step 3/3. The chain is Argininosuccinate lyase from Paramagnetospirillum magneticum (strain ATCC 700264 / AMB-1) (Magnetospirillum magneticum).